The primary structure comprises 352 residues: tRNA N6-adenosine threonylcarbamoyltransferase (352 aa).

The a divalent metal cation site is built by H114, H118, and Y135. Substrate is bound by residues Y135–G139, D167, G182, E186, and N283. D311 is a binding site for a divalent metal cation.

It belongs to the KAE1 / TsaD family. In terms of assembly, component of the EKC/KEOPS complex composed of at least BUD32, CGI121, GON7, KAE1 and PCC1; the whole complex dimerizes. A divalent metal cation is required as a cofactor.

It localises to the cytoplasm. Its subcellular location is the nucleus. The enzyme catalyses L-threonylcarbamoyladenylate + adenosine(37) in tRNA = N(6)-L-threonylcarbamoyladenosine(37) in tRNA + AMP + H(+). In terms of biological role, component of the EKC/KEOPS complex that is required for the formation of a threonylcarbamoyl group on adenosine at position 37 (t(6)A37) in tRNAs that read codons beginning with adenine. The complex is probably involved in the transfer of the threonylcarbamoyl moiety of threonylcarbamoyl-AMP (TC-AMP) to the N6 group of A37. KAE1 likely plays a direct catalytic role in this reaction, but requires other protein(s) of the complex to fulfill this activity. The EKC/KEOPS complex also promotes both telomere uncapping and telomere elongation. The complex is required for efficient recruitment of transcriptional coactivators. The chain is tRNA N6-adenosine threonylcarbamoyltransferase from Phaeosphaeria nodorum (strain SN15 / ATCC MYA-4574 / FGSC 10173) (Glume blotch fungus).